The chain runs to 142 residues: MVLSADDKTNIKNCWGKIGGHGGEYGEEALQRMFAAFPTTKTYFSHIDVSPGSAQVKAHGKKVADALAKAADHVEDLPGALSTLSDLHAHKLRVDPVNFKFLSHCLLVTLACHHPGDFTPAMHASLDKFLASVSTVLTSKYR.

The 141-residue stretch at 2 to 142 folds into the Globin domain; sequence VLSADDKTNI…VSTVLTSKYR (141 aa). Residue Ser4 is modified to Phosphoserine. The residue at position 8 (Lys8) is an N6-succinyllysine. Thr9 bears the Phosphothreonine mark. Residue Lys12 is modified to N6-succinyllysine. At Lys17 the chain carries N6-acetyllysine; alternate. Lys17 is modified (N6-succinyllysine; alternate). Tyr25 carries the post-translational modification Phosphotyrosine. Lys41 carries the N6-succinyllysine modification. The residue at position 50 (Ser50) is a Phosphoserine. An O2-binding site is contributed by His59. His88 contacts heme b. Ser103 carries the post-translational modification Phosphoserine. Position 109 is a phosphothreonine (Thr109). Phosphoserine is present on residues Ser125 and Ser132. Thr135 and Thr138 each carry phosphothreonine. The residue at position 139 (Ser139) is a Phosphoserine.

This sequence belongs to the globin family. Heterotetramer of two alpha chains and two beta chains. Red blood cells.

Its function is as follows. Involved in oxygen transport from the lung to the various peripheral tissues. Functionally, hemopressin acts as an antagonist peptide of the cannabinoid receptor CNR1. Hemopressin-binding efficiently blocks cannabinoid receptor CNR1 and subsequent signaling. The protein is Hemoglobin subunit alpha-1/2 (Hba1) of Rattus norvegicus (Rat).